The primary structure comprises 1533 residues: DNA topoisomerase 2-alpha (1533 aa).

Met1 is modified (N-acetylmethionine). Positions Met1–Glu22 are disordered. The residue at position 4 (Ser4) is a Phosphoserine. Polar residues predominate over residues Gln7–Asn16. Lys17 participates in a covalent cross-link: Glycyl lysine isopeptide (Lys-Gly) (interchain with G-Cter in SUMO2). ATP-binding positions include Asn91, Asn120, and Ser148–Asn150. Residues Lys156 and Lys157 each participate in a glycyl lysine isopeptide (Lys-Gly) (interchain with G-Cter in SUMO2) cross-link. Gly161 to Lys168 is a binding site for ATP. Lys261 participates in a covalent cross-link: Glycyl lysine isopeptide (Lys-Gly) (interchain with G-Cter in SUMO2). At Thr282 the chain carries Phosphothreonine. The interaction with DNA stretch occupies residues Lys342–Lys344. Lys352 participates in a covalent cross-link: Glycyl lysine isopeptide (Lys-Gly) (interchain with G-Cter in SUMO2). ATP is bound at residue Gln376–Lys378. Glycyl lysine isopeptide (Lys-Gly) (interchain with G-Cter in SUMO2) cross-links involve residues Lys386, Lys397, Lys416, Lys418, Lys425, and Lys440. The Toprim domain maps to Cys455–Glu572. Glu461 contacts Mg(2+). Glycyl lysine isopeptide (Lys-Gly) (interchain with G-Cter in SUMO2) cross-links involve residues Lys466, Lys480, and Lys529. Mg(2+) contacts are provided by Asp541 and Asp543. Residues Lys584, Lys599, Lys614, Lys622, Lys625, Lys632, Lys639, Lys655, Lys662, and Lys676 each participate in a glycyl lysine isopeptide (Lys-Gly) (interchain with G-Cter in SUMO2) cross-link. In terms of domain architecture, Topo IIA-type catalytic spans Ile715–Leu1171. Tyr805 acts as the O-(5'-phospho-DNA)-tyrosine intermediate in catalysis. The interval Lys990–Ser999 is interaction with DNA. Lys1075 participates in a covalent cross-link: Glycyl lysine isopeptide (Lys-Gly) (interchain with G-Cter in SUMO2). Disordered stretches follow at residues Trp1090 to Ser1121 and Ala1183 to Cys1215. The segment covering Asp1099–Asn1108 has biased composition (acidic residues). A Phosphoserine; by CK1 modification is found at Ser1106. Residues Lys1114, Lys1196, and Lys1204 each participate in a glycyl lysine isopeptide (Lys-Gly) (interchain with G-Cter in SUMO2) cross-link. Position 1205 is a phosphothreonine (Thr1205). Position 1213 is a phosphoserine (Ser1213). Residue Lys1228 forms a Glycyl lysine isopeptide (Lys-Gly) (interchain with G-Cter in SUMO2) linkage. Residues Ala1231–Phe1533 form a disordered region. Lys1240 participates in a covalent cross-link: Glycyl lysine isopeptide (Lys-Gly) (interchain with G-Cter in SUMO1); alternate. Lys1240 is covalently cross-linked (Glycyl lysine isopeptide (Lys-Gly) (interchain with G-Cter in SUMO2); alternate). Thr1244 carries the phosphothreonine modification. At Ser1247 the chain carries Phosphoserine. Basic and acidic residues predominate over residues Glu1256 to Thr1272. Residues Lys1259, Lys1276, Lys1283, and Lys1286 each participate in a glycyl lysine isopeptide (Lys-Gly) (interchain with G-Cter in SUMO2) cross-link. 4 positions are modified to phosphoserine: Ser1295, Ser1297, Ser1299, and Ser1302. Position 1327 is a phosphothreonine (Thr1327). Residues Ser1332 and Ser1337 each carry the phosphoserine modification. Position 1343 is a phosphothreonine (Thr1343). Ser1351 and Ser1354 each carry phosphoserine. A compositionally biased stretch (basic and acidic residues) spans Thr1360–Pro1371. Glycyl lysine isopeptide (Lys-Gly) (interchain with G-Cter in SUMO2) cross-links involve residues Lys1363, Lys1367, and Lys1373. 2 positions are modified to phosphoserine: Ser1374 and Ser1377. A Glycyl lysine isopeptide (Lys-Gly) (interchain with G-Cter in SUMO2) cross-link involves residue Lys1387. 2 positions are modified to phosphoserine: Ser1393 and Ser1395. The segment covering Lys1409–Gly1433 has biased composition (low complexity). Residue Lys1424 forms a Glycyl lysine isopeptide (Lys-Gly) (interchain with G-Cter in SUMO2); alternate linkage. The residue at position 1424 (Lys1424) is an N6-acetyllysine; alternate. The segment at Lys1435 to Lys1441 is interaction with PLSCR1. Basic and acidic residues predominate over residues Ala1443 to Lys1455. Lys1444 participates in a covalent cross-link: Glycyl lysine isopeptide (Lys-Gly) (interchain with G-Cter in SUMO2); alternate. Lys1444 carries the post-translational modification N6-acetyllysine; alternate. At Ser1451 the chain carries Phosphoserine. Glycyl lysine isopeptide (Lys-Gly) (interchain with G-Cter in SUMO2) cross-links involve residues Lys1456 and Lys1461. Phosphoserine is present on Ser1471. At Thr1472 the chain carries Phosphothreonine. Phosphoserine occurs at positions 1473, 1476, and 1478. Residues Lys1486 and Lys1494 each participate in a glycyl lysine isopeptide (Lys-Gly) (interchain with G-Cter in SUMO2) cross-link. Basic and acidic residues predominate over residues Pro1493 to Leu1504. 2 positions are modified to phosphoserine: Ser1497 and Ser1527.

The protein belongs to the type II topoisomerase family. In terms of assembly, homodimer. Interacts with COPS5. Interacts with RECQL5; this stimulates DNA decatenation. Interacts with SETMAR; stimulates the topoisomerase activity. Interacts with DHX9; this interaction occurs in a E2 enzyme UBE2I- and RNA-dependent manner, negatively regulates DHX9-mediated double-stranded DNA and RNA duplex helicase activity and stimulates TOP2A-mediated supercoiled DNA relaxation activity. Interacts with HNRNPU (via C-terminus); this interaction protects the topoisomerase TOP2A from degradation and positively regulates the relaxation of supercoiled DNA in a RNA-dependent manner. Interacts with MCM3AP. Interacts with ERCC6. Interacts with PLSCR1. Interacts with GCNA; this interaction allows the resolution of topoisomerase II (TOP2A) DNA-protein cross-links. Interacts with POL1RA/RPA1 (via dock II) and UBTF in the context of Pol I complex; may assist Pol I transcription initiation by releasing supercoils occurring during DNA unwinding. Interacts with TPRN; TPRN interacts with a number of DNA damage response proteins, is recruited to sites of DNA damage and may play a role in DNA damage repair. The cofactor is Mg(2+). Mn(2+) serves as cofactor. Requires Ca(2+) as cofactor. Post-translationally, phosphorylation has no effect on catalytic activity. However, phosphorylation at Ser-1106 by CSNK1D/CK1 promotes DNA cleavable complex formation.

The protein localises to the cytoplasm. Its subcellular location is the nucleus. It localises to the nucleoplasm. The protein resides in the nucleolus. It catalyses the reaction ATP-dependent breakage, passage and rejoining of double-stranded DNA.. Its function is as follows. Key decatenating enzyme that alters DNA topology by binding to two double-stranded DNA molecules, generating a double-stranded break in one of the strands, passing the intact strand through the broken strand, and religating the broken strand. May play a role in regulating the period length of BMAL1 transcriptional oscillation. The sequence is that of DNA topoisomerase 2-alpha (TOP2A) from Sus scrofa (Pig).